A 960-amino-acid polypeptide reads, in one-letter code: Semaphorin-6C (960 aa).

Residues 1-23 (MPRAPHSMPLLLLLLLSLPQAQT) form the signal peptide. The Extracellular portion of the chain corresponds to 24–635 (AFPQDPIPLL…ASASRSIPIP (612 aa)). Residues 29–515 (PIPLLTSDLQ…FPGCIVYLSL (487 aa)) enclose the Sema domain. Asparagine 69 carries an N-linked (GlcNAc...) asparagine glycan. 4 disulfides stabilise this stretch: cysteine 110/cysteine 120, cysteine 138/cysteine 147, cysteine 261/cysteine 372, and cysteine 286/cysteine 331. Asparagine 285 is a glycosylation site (N-linked (GlcNAc...) asparagine). Asparagine 436 carries N-linked (GlcNAc...) asparagine glycosylation. Disulfide bonds link cysteine 478–cysteine 509, cysteine 518–cysteine 536, cysteine 524–cysteine 569, and cysteine 528–cysteine 544. The segment at 555–624 (VDLTGNQESM…HTQGVRRDLS (70 aa)) is disordered. Residues 636-656 (LLLACVAAAFALGASVSGLLV) traverse the membrane as a helical segment. Residues 657 to 960 (SCACRRANRR…PAPHGSHFNF (304 aa)) are Cytoplasmic-facing. Disordered stretches follow at residues 685-725 (LARL…SPPE), 745-792 (ASGG…PGQE), and 806-960 (HGPQ…HFNF). The span at 899-909 (RVPSGGPSRYS) shows a compositional bias: low complexity. Residues 922–935 (PDGHRGRSLKRVDV) are compositionally biased toward basic and acidic residues. The span at 940-952 (SPKPPLATPPQPA) shows a compositional bias: pro residues.

The protein belongs to the semaphorin family. As to expression, expressed in many regions of the developing nervous system, probably in neurons and their precursors, but also in nonneural tissue such as immature muscle and dermis. In adult, strong expression in the skeletal muscle and moderate expression in the brain, where cerebellum shows the highest expression. Also expressed in almost all areas of the CNS.

The protein localises to the cell membrane. Shows growth cone collapsing activity on dorsal root ganglion (DRG) neurons in vitro. May be a stop signal for the DRG neurons in their target areas, and possibly also for other neurons. May also be involved in the maintenance and remodeling of neuronal connections. This Rattus norvegicus (Rat) protein is Semaphorin-6C (Sema6c).